The sequence spans 486 residues: Lipase 1 (486 aa).

Cys58 and Cys82 are joined by a disulfide. Ser193 functions as the Acyl-ester intermediate in the catalytic mechanism. Asp303 serves as the catalytic Charge relay system. Asn332 is a glycosylation site (N-linked (GlcNAc...) asparagine). Catalysis depends on His392, which acts as the Charge relay system.

The protein belongs to the type-B carboxylesterase/lipase family.

The catalysed reaction is a triacylglycerol + H2O = a diacylglycerol + a fatty acid + H(+). In Yarrowia lipolytica (strain CLIB 122 / E 150) (Yeast), this protein is Lipase 1 (LIP1).